We begin with the raw amino-acid sequence, 488 residues long: Glutamyl-tRNA(Gln) amidotransferase subunit A (488 aa).

Catalysis depends on charge relay system residues Lys79 and Ser159. Ser183 (acyl-ester intermediate) is an active-site residue.

The protein belongs to the amidase family. GatA subfamily. In terms of assembly, heterotrimer of A, B and C subunits.

The enzyme catalyses L-glutamyl-tRNA(Gln) + L-glutamine + ATP + H2O = L-glutaminyl-tRNA(Gln) + L-glutamate + ADP + phosphate + H(+). Allows the formation of correctly charged Gln-tRNA(Gln) through the transamidation of misacylated Glu-tRNA(Gln) in organisms which lack glutaminyl-tRNA synthetase. The reaction takes place in the presence of glutamine and ATP through an activated gamma-phospho-Glu-tRNA(Gln). The sequence is that of Glutamyl-tRNA(Gln) amidotransferase subunit A from Wolbachia pipientis subsp. Culex pipiens (strain wPip).